Consider the following 120-residue polypeptide: Immunoglobulin kappa variable 2-24 (120 aa).

The signal sequence occupies residues 1 to 19; the sequence is MRLLAQLLGLLMLWVPGSS. One can recognise an Ig-like domain in the interval 20-120; that stretch reads GDIVMTQTPL…YYCMQATQFP (101 aa). A framework-1 region spans residues 21 to 43; it reads DIVMTQTPLSSPVTLGQPASISC. A disulfide bond links Cys43 and Cys113. Residues 44 to 59 are complementarity-determining-1; sequence RSSQSLVHSDGNTYLS. Residues 60-74 form a framework-2 region; sequence WLQQRPGQPPRLLIY. The segment at 75 to 81 is complementarity-determining-2; the sequence is KISNRFS. The framework-3 stretch occupies residues 82-113; that stretch reads GVPDRFSGSGAGTDFTLKISRVEAEDVGVYYC. A complementarity-determining-3 region spans residues 114-120; sequence MQATQFP.

In terms of assembly, immunoglobulins are composed of two identical heavy chains and two identical light chains; disulfide-linked.

Its subcellular location is the secreted. The protein resides in the cell membrane. Functionally, v region of the variable domain of immunoglobulin light chains that participates in the antigen recognition. Immunoglobulins, also known as antibodies, are membrane-bound or secreted glycoproteins produced by B lymphocytes. In the recognition phase of humoral immunity, the membrane-bound immunoglobulins serve as receptors which, upon binding of a specific antigen, trigger the clonal expansion and differentiation of B lymphocytes into immunoglobulins-secreting plasma cells. Secreted immunoglobulins mediate the effector phase of humoral immunity, which results in the elimination of bound antigens. The antigen binding site is formed by the variable domain of one heavy chain, together with that of its associated light chain. Thus, each immunoglobulin has two antigen binding sites with remarkable affinity for a particular antigen. The variable domains are assembled by a process called V-(D)-J rearrangement and can then be subjected to somatic hypermutations which, after exposure to antigen and selection, allow affinity maturation for a particular antigen. In Homo sapiens (Human), this protein is Immunoglobulin kappa variable 2-24.